Consider the following 311-residue polypeptide: Homeobox-leucine zipper protein HOX1 (311 aa).

Disordered stretches follow at residues 29–69 (AGGA…SDHR) and 97–160 (AETT…KKLR). The span at 119–145 (SSPNSTLSSLSGKRGAPSAATAAAAAA) shows a compositional bias: low complexity. The segment at residues 154–213 (GSRKKLRLSKDQAAVLEDTFKEHNTLNPKQKAALARQLNLKPRQVEVWFQNRRARTKLKQ) is a DNA-binding region (homeobox). The leucine-zipper stretch occupies residues 212–256 (KQTEVDCELLKRCCETLTDENRRLHRELQELRALKLATAAAAPHH). The disordered stretch occupies residues 279–311 (SAATTTRNNSGAAPARPVPTRPWPPAAAQRSSA). Polar residues predominate over residues 280 to 289 (AATTTRNNSG). Positions 294–303 (RPVPTRPWPP) are enriched in pro residues.

This sequence belongs to the HD-ZIP homeobox family. Class II subfamily. As to quaternary structure, homodimer. May form a heterodimer with HOX2, HOX3 or HOX7. In terms of tissue distribution, expressed in root provascular and vascular cylinder, provascular and vascular strands of leaves, provascular and vascular strands of the whole panicle, in mature embryo provascular bundles of scutellum and embryonic axis and provascular and vascular strands of young immature spikelet organs. Expressed in differentiating and differentiated xylem and phloem elements, and in outer and inner bundle sheath cells of all vascular bundles. Expressed in auricles, ligules, culm, guard cells brac hairs and pollen.

It localises to the nucleus. Probable transcription repressor involved leaf development. Binds to the DNA sequence 5'-CAAT[GC]ATTG-3'. May act as a regulatory switch to specify provascular cell fate. This Oryza sativa subsp. japonica (Rice) protein is Homeobox-leucine zipper protein HOX1 (HOX1).